Reading from the N-terminus, the 265-residue chain is Bidirectional sugar transporter SWEET7b (265 aa).

Over 1 to 9 (MVSPDLIRN) the chain is Extracellular. Residues 10–30 (MVGIVGNIISFGLFLSPVPTF) form a helical membrane-spanning segment. The MtN3/slv 1 domain maps to 10–97 (MVGIVGNIIS…TIFFLFSDKK (88 aa)). At 31-45 (YRIIKNKDVQDFKAD) the chain is on the cytoplasmic side. A helical transmembrane segment spans residues 46 to 66 (PYLATLLNCMLWVFYGLPIVH). At 67–69 (PNS) the chain is on the extracellular side. A helical membrane pass occupies residues 70 to 90 (ILVVTINGIGLVIEAVYLTIF). Residues 91 to 101 (FLFSDKKNKKK) lie on the Cytoplasmic side of the membrane. The helical transmembrane segment at 102–122 (MGVVLATEALFMAAVVLGVLL) threads the bilayer. Topologically, residues 123 to 131 (GAHTHQRRS) are extracellular. Residues 132 to 152 (LIVGILCVIFGTIMYSSPLTI) form a helical membrane-spanning segment. The MtN3/slv 2 domain maps to 133-215 (IVGILCVIFG…QLILYAIYYR (83 aa)). At 153-165 (MSQVVKTKSVEYM) the chain is on the cytoplasmic side. A helical membrane pass occupies residues 166–186 (PLLLSVVSFLNGLCWTSYALI). Over 187–189 (RLD) the chain is Extracellular. Residues 190–210 (IFITIPNGLGVLFALMQLILY) traverse the membrane as a helical segment. Over 211 to 265 (AIYYRTIPKKQDKNLELPTVAPVAKDTSIVTPVSKDDDVDGGNASHVTINITIEL) the chain is Cytoplasmic.

This sequence belongs to the SWEET sugar transporter family. As to quaternary structure, forms homooligomers and/or heterooligomers.

The protein localises to the cell membrane. Its function is as follows. Mediates both low-affinity uptake and efflux of sugar across the plasma membrane. This chain is Bidirectional sugar transporter SWEET7b (SWEET7B), found in Oryza sativa subsp. japonica (Rice).